We begin with the raw amino-acid sequence, 31 residues long: Hyaluronidase (31 aa).

The protein belongs to the glycosyl hydrolase 56 family. In terms of processing, contains 2 disulfide bonds. Post-translationally, N-glycosylated on at least two Asn residues by identical heptasaccharide units composed of Man, GlcNAc, and Fuc residues in the molar ration of 3:2:2. Expressed by the venom gland.

It is found in the secreted. It catalyses the reaction Random hydrolysis of (1-&gt;4)-linkages between N-acetyl-beta-D-glucosamine and D-glucuronate residues in hyaluronate.. Hydrolyzes high molecular weight hyaluronic acid to produce small oligosaccharides. The protein is Hyaluronidase of Vespula maculifrons (Eastern yellow jacket).